A 496-amino-acid polypeptide reads, in one-letter code: Glycerol kinase (496 aa).

Residue T11 coordinates ADP. ATP contacts are provided by T11, T12, and S13. Residue T11 participates in sn-glycerol 3-phosphate binding. Residue R15 participates in ADP binding. Sn-glycerol 3-phosphate-binding residues include R81, E82, Y133, and D242. The glycerol site is built by R81, E82, Y133, D242, and Q243. Residues T264 and G307 each coordinate ADP. ATP-binding residues include T264, G307, and Q311. N413 provides a ligand contact to ADP.

It belongs to the FGGY kinase family.

It carries out the reaction glycerol + ATP = sn-glycerol 3-phosphate + ADP + H(+). It participates in polyol metabolism; glycerol degradation via glycerol kinase pathway; sn-glycerol 3-phosphate from glycerol: step 1/1. Inhibited by fructose 1,6-bisphosphate (FBP). Key enzyme in the regulation of glycerol uptake and metabolism. Catalyzes the phosphorylation of glycerol to yield sn-glycerol 3-phosphate. This Borrelia duttonii (strain Ly) protein is Glycerol kinase.